The sequence spans 156 residues: SsrA-binding protein (156 aa).

This sequence belongs to the SmpB family.

Its subcellular location is the cytoplasm. In terms of biological role, required for rescue of stalled ribosomes mediated by trans-translation. Binds to transfer-messenger RNA (tmRNA), required for stable association of tmRNA with ribosomes. tmRNA and SmpB together mimic tRNA shape, replacing the anticodon stem-loop with SmpB. tmRNA is encoded by the ssrA gene; the 2 termini fold to resemble tRNA(Ala) and it encodes a 'tag peptide', a short internal open reading frame. During trans-translation Ala-aminoacylated tmRNA acts like a tRNA, entering the A-site of stalled ribosomes, displacing the stalled mRNA. The ribosome then switches to translate the ORF on the tmRNA; the nascent peptide is terminated with the 'tag peptide' encoded by the tmRNA and targeted for degradation. The ribosome is freed to recommence translation, which seems to be the essential function of trans-translation. In Bacillus velezensis (strain DSM 23117 / BGSC 10A6 / LMG 26770 / FZB42) (Bacillus amyloliquefaciens subsp. plantarum), this protein is SsrA-binding protein.